We begin with the raw amino-acid sequence, 1486 residues long: Alsin homolog (1486 aa).

RCC1 repeat units lie at residues 147-201 (QGVV…MLVA), 256-307 (HTQL…ARTL), and 308-363 (DGRL…LLNA). MORN repeat units follow at residues 744-765 (CGTW…DGSV), 766-784 (YCGE…MVIP), 789-804 (YVGN…HGVY), 817-832 (YEGN…HGVM), 839-853 (YVGE…GYGV), and 863-884 (YMGM…NRGD). Residues 1333-1486 (SRKDEMYRQN…VTSRALQKIP (154 aa)) enclose the VPS9 domain.

In terms of tissue distribution, in the embryo, expressed in a wide range of tissues including the epidermis and the ventral nerve cord.

Has guanine nucleotide exchange factor (GEF) activity towards Rab5. Promotes the exchange of GDP to GTP, converting inactive GDP-bound Rab5 into its active GTP-bound form. In Drosophila melanogaster (Fruit fly), this protein is Alsin homolog.